A 41-amino-acid polypeptide reads, in one-letter code: MTTNKDTRYPIFTFRWLAVHALAIPTVFFLGSISAMQFIQR.

A helical membrane pass occupies residues 16 to 32 (WLAVHALAIPTVFFLGS). Residue His20 participates in heme binding.

This sequence belongs to the PsbE/PsbF family. Heterodimer of an alpha subunit and a beta subunit. PSII is composed of 1 copy each of membrane proteins PsbA, PsbB, PsbC, PsbD, PsbE, PsbF, PsbH, PsbI, PsbJ, PsbK, PsbL, PsbM, PsbT, PsbY, PsbZ, Psb30/Ycf12, at least 3 peripheral proteins of the oxygen-evolving complex and a large number of cofactors. It forms dimeric complexes. It depends on heme b as a cofactor.

It is found in the plastid. The protein localises to the chloroplast thylakoid membrane. Its function is as follows. This b-type cytochrome is tightly associated with the reaction center of photosystem II (PSII). PSII is a light-driven water:plastoquinone oxidoreductase that uses light energy to abstract electrons from H(2)O, generating O(2) and a proton gradient subsequently used for ATP formation. It consists of a core antenna complex that captures photons, and an electron transfer chain that converts photonic excitation into a charge separation. This chain is Cytochrome b559 subunit beta, found in Euglena gracilis.